A 48-amino-acid chain; its full sequence is Delta-stichotoxin-Hcr1e (48 aa).

Disulfide bonds link C3–C43, C5–C33, and C26–C44.

It belongs to the sea anemone sodium channel inhibitory toxin family. Type II subfamily.

The protein resides in the secreted. It localises to the nematocyst. Functionally, binds to site 3 of voltage-gated sodium channels and inhibits the inactivation process. This Radianthus crispa (Leathery sea anemone) protein is Delta-stichotoxin-Hcr1e.